Reading from the N-terminus, the 369-residue chain is Signal recognition particle receptor FtsY (369 aa).

A compositionally biased stretch (basic and acidic residues) spans 20-42 (GEENKKEPETRQTDQLESKKEET). Residues 20–58 (GEENKKEPETRQTDQLESKKEETIQQQQNVQQPQAENKI) form a disordered region. Positions 44–53 (QQQQNVQQPQ) are enriched in low complexity. GTP-binding positions include 180-187 (GVNGVGKT), 262-266 (DTAGR), and 320-323 (TKVD).

This sequence belongs to the GTP-binding SRP family. FtsY subfamily. As to quaternary structure, part of the signal recognition particle protein translocation system, which is composed of SRP and FtsY.

The protein localises to the cell membrane. It is found in the cytoplasm. The catalysed reaction is GTP + H2O = GDP + phosphate + H(+). Functionally, involved in targeting and insertion of nascent membrane proteins into the cytoplasmic membrane. Acts as a receptor for the complex formed by the signal recognition particle (SRP) and the ribosome-nascent chain (RNC). The chain is Signal recognition particle receptor FtsY from Sulfolobus acidocaldarius (strain ATCC 33909 / DSM 639 / JCM 8929 / NBRC 15157 / NCIMB 11770).